A 460-amino-acid polypeptide reads, in one-letter code: Citrate synthase, peroxisomal (460 aa).

S21 bears the Phosphoserine mark. Residues K218 and K239 each participate in a glycyl lysine isopeptide (Lys-Gly) (interchain with G-Cter in ubiquitin) cross-link. Catalysis depends on residues H293 and H339. Glycyl lysine isopeptide (Lys-Gly) (interchain with G-Cter in ubiquitin) cross-links involve residues K354 and K385. D394 is a catalytic residue. The C-terminal peroxisome targeting signal (PTS1) signature appears at 458 to 460 (SKL).

Belongs to the citrate synthase family. As to quaternary structure, interacts with F-box protein UCC1. Ubiquitinated by the E3 ubiquitin-protein ligase complex SCF(UCC1), which leads to its degradation by the proteasome. Ubiquitination is prevented by oxaloacetate, suggesting the existence of an oxaloacetate-dependent positive feedback loop that stabilizes CIT2.

The protein localises to the cytoplasm. It localises to the peroxisome. The catalysed reaction is oxaloacetate + acetyl-CoA + H2O = citrate + CoA + H(+). The protein operates within carbohydrate metabolism; tricarboxylic acid cycle; isocitrate from oxaloacetate: step 1/2. Its function is as follows. Peroxisomal citrate synthase involved in the citrate homeostasis. Catalyzes the condensation of acetyl coenzyme A and oxaloacetate to form citrate. Citrate synthase is the rate-limiting enzyme of the tricarboxylic acid (TCA) cycle. This chain is Citrate synthase, peroxisomal, found in Saccharomyces cerevisiae (strain ATCC 204508 / S288c) (Baker's yeast).